Here is a 249-residue protein sequence, read N- to C-terminus: Small ribosomal subunit protein uS2 (249 aa).

It belongs to the universal ribosomal protein uS2 family.

This Polynucleobacter asymbioticus (strain DSM 18221 / CIP 109841 / QLW-P1DMWA-1) (Polynucleobacter necessarius subsp. asymbioticus) protein is Small ribosomal subunit protein uS2.